Consider the following 109-residue polypeptide: MLLITSMLVLWMQLSQVNGQQVMQIPQYQHVQEGEDFTTYCNSSTTLSNIQWYKQRPGGHPVFLIQLVKSGEVKKQKRLTFQFGEAKKNSSLHITATQTTDVGTYFCAG.

Positions 1–19 are cleaved as a signal peptide; it reads MLLITSMLVLWMQLSQVNG. One can recognise an Ig-like domain in the interval 20-109; sequence QQVMQIPQYQ…TDVGTYFCAG (90 aa). Cys-41 and Cys-107 are oxidised to a cystine. 2 N-linked (GlcNAc...) asparagine glycosylation sites follow: Asn-42 and Asn-89.

In terms of assembly, alpha-beta TR is a heterodimer composed of an alpha and beta chain; disulfide-linked. The alpha-beta TR is associated with the transmembrane signaling CD3 coreceptor proteins to form the TR-CD3 (TcR or TCR). The assembly of alpha-beta TR heterodimers with CD3 occurs in the endoplasmic reticulum where a single alpha-beta TR heterodimer associates with one CD3D-CD3E heterodimer, one CD3G-CD3E heterodimer and one CD247 homodimer forming a stable octameric structure. CD3D-CD3E and CD3G-CD3E heterodimers preferentially associate with TR alpha and TR beta chains, respectively. The association of the CD247 homodimer is the last step of TcR assembly in the endoplasmic reticulum and is required for transport to the cell surface.

Its subcellular location is the cell membrane. Functionally, v region of the variable domain of T cell receptor (TR) alpha chain that participates in the antigen recognition. Alpha-beta T cell receptors are antigen specific receptors which are essential to the immune response and are present on the cell surface of T lymphocytes. Recognize peptide-major histocompatibility (MH) (pMH) complexes that are displayed by antigen presenting cells (APC), a prerequisite for efficient T cell adaptive immunity against pathogens. Binding of alpha-beta TR to pMH complex initiates TR-CD3 clustering on the cell surface and intracellular activation of LCK that phosphorylates the ITAM motifs of CD3G, CD3D, CD3E and CD247 enabling the recruitment of ZAP70. In turn ZAP70 phosphorylates LAT, which recruits numerous signaling molecules to form the LAT signalosome. The LAT signalosome propagates signal branching to three major signaling pathways, the calcium, the mitogen-activated protein kinase (MAPK) kinase and the nuclear factor NF-kappa-B (NF-kB) pathways, leading to the mobilization of transcription factors that are critical for gene expression and essential for T cell growth and differentiation. The T cell repertoire is generated in the thymus, by V-(D)-J rearrangement. This repertoire is then shaped by intrathymic selection events to generate a peripheral T cell pool of self-MH restricted, non-autoaggressive T cells. Post-thymic interaction of alpha-beta TR with the pMH complexes shapes TR structural and functional avidity. This chain is T cell receptor alpha variable 25, found in Homo sapiens (Human).